Here is a 481-residue protein sequence, read N- to C-terminus: Proline--tRNA ligase (481 aa).

This sequence belongs to the class-II aminoacyl-tRNA synthetase family. ProS type 3 subfamily. In terms of assembly, homodimer.

It localises to the cytoplasm. It carries out the reaction tRNA(Pro) + L-proline + ATP = L-prolyl-tRNA(Pro) + AMP + diphosphate. Functionally, catalyzes the attachment of proline to tRNA(Pro) in a two-step reaction: proline is first activated by ATP to form Pro-AMP and then transferred to the acceptor end of tRNA(Pro). The chain is Proline--tRNA ligase from Chlorobium phaeobacteroides (strain DSM 266 / SMG 266 / 2430).